Reading from the N-terminus, the 132-residue chain is Cliotide T2 (132 aa).

An N-terminal signal peptide occupies residues 1 to 28 (MAYVRLTSLAVLFFLAASVMLNVKKTEG). Residues 29–58 (GEFLKCGESCVQGECYTPGCSCDWPICKKN) constitute a cross-link (cyclopeptide (Gly-Asn)). Cystine bridges form between Cys-34–Cys-48, Cys-38–Cys-50, and Cys-43–Cys-55. Positions 59 to 132 (HIIATNAKTV…NLKMPMTIIN (74 aa)) are cleaved as a propeptide — removed in mature form.

In terms of processing, this is a cyclic peptide. In terms of tissue distribution, expressed in flower, stem, shoot and pod but not in root, leaf, seed and nodule (at protein level).

In terms of biological role, probably participates in a plant defense mechanism. Not active against Gram-negative bacteria E.coli ATCC 700926, K.pneumoniae ATTC 13883 and P.aeruginosa ATCC 39018 at concentration up to 100 uM. Has cytotoxic but no hemolytic activity. This Clitoria ternatea (Butterfly pea) protein is Cliotide T2.